Consider the following 314-residue polypeptide: Dual specificity protein phosphatase 2 (314 aa).

The 122-residue stretch at 23 to 144 (EAERTLLLDC…FQGCCPDLCS (122 aa)) folds into the Rhodanese domain. One can recognise a Tyrosine-protein phosphatase domain in the interval 172 to 313 (GPVEILPYLF…LLQFETQVLC (142 aa)). Residue Cys-257 is the Phosphocysteine intermediate of the active site.

Belongs to the protein-tyrosine phosphatase family. Non-receptor class dual specificity subfamily. In terms of assembly, interacts with MAPK14; this interaction does not lead to catalytic activation of DUSP2 and dephosphrylation of MAPK14. In terms of tissue distribution, expressed in hematopoietic tissues.

It is found in the nucleus. It catalyses the reaction O-phospho-L-tyrosyl-[protein] + H2O = L-tyrosyl-[protein] + phosphate. It carries out the reaction O-phospho-L-threonyl-[protein] + H2O = L-threonyl-[protein] + phosphate. Its function is as follows. Dephosphorylates both phosphorylated Thr and Tyr residues in MAPK1, and dephosphorylation of phosphotyrosine is slightly faster than that of phosphothreonine. Can dephosphorylate MAPK1. This Homo sapiens (Human) protein is Dual specificity protein phosphatase 2.